We begin with the raw amino-acid sequence, 1596 residues long: Transcription factor Zelda (1596 aa).

3 disordered regions span residues Met1–Gln143, Ser209–Ala273, and Thr490–Pro530. Residues Ala13–Asp24 show a composition bias toward low complexity. The span at Ser25–Gly53 shows a compositional bias: gly residues. Residues Asn60–Asn72 show a composition bias toward polar residues. 2 stretches are compositionally biased toward low complexity: residues Gln73–Gln123 and Ser226–Gly267. The span at Gly501–Arg518 shows a compositional bias: gly residues. The C2H2-type 1 zinc finger occupies Tyr552–His576. Disordered stretches follow at residues Asn578–Ala813, Glu825–Leu945, Gly1017–Thr1074, and Gln1252–Pro1322. Residues Arg610 to Gln634 show a composition bias toward low complexity. The span at Pro635–Pro653 shows a compositional bias: pro residues. The segment covering Tyr656–Gly668 has biased composition (gly residues). The segment covering Ser673–Thr682 has biased composition (polar residues). 2 stretches are compositionally biased toward low complexity: residues Gln683–Tyr709 and Asn719–Ser753. Residues Pro768–Met781 show a composition bias toward polar residues. Over residues Thr796–Ala813 the composition is skewed to low complexity. Residues Thr830–His840 show a composition bias toward basic residues. Positions Ser849–Thr858 are enriched in low complexity. Basic and acidic residues predominate over residues Gln864–His877. Residues His879–Pro916 show a composition bias toward low complexity. The tract at residues Ser904 to Asn1297 is transactivation activation domain (TAD). Residues Arg921–Thr932 show a composition bias toward polar residues. A compositionally biased stretch (pro residues) spans Thr933–Met944. Positions Gln1019–Gln1036 are enriched in basic and acidic residues. Composition is skewed to low complexity over residues Leu1037 to Ser1062 and Gln1252 to Gln1275. 2 stretches are compositionally biased toward polar residues: residues Ile1276 to Gln1286 and Ser1309 to Pro1322. Residues Ile1326–His1349 form a C2H2-type 2 zinc finger. The C2H2-type 3; degenerate zinc finger occupies Phe1355 to Arg1378. 2 consecutive C2H2-type zinc fingers follow at residues His1384–His1407 and His1413–His1435.

Zygotically expressed in the developing embryonic germ layers, nervous system, imaginal disk primordia and in larval wing and eye disks. In terms of tissue distribution, detected in the germline cells of the ovary, in unfertilized eggs and throughout early development. Later, it becomes mostly restricted to the nervous system and specific head regions. Also expressed in imaginal wing disks in third instar larvae.

The protein localises to the nucleus. It localises to the chromosome. Functionally, transcription factor required for zygotic genome activation (ZGA), a critical event in early embryonic development during which the developmental control passes from maternally provided mRNAs to the expression of the zygotic genome after fertilization. Binds to regulatory DNA sequences containing a 5'-CAGGTAG-3' sequence motif, which are highly enriched among developmental enhancers. Within 1 hour into development, or by the embryo's 8th nuclear cycle, binds the majority of its motifs genome-wide. Zelda-binding promotes nucleosome depletion and chromatin accessibility, thereby facilitating the binding of patterning transcription factors, including the binding of the dorsoventral patterning transcription factors dorsal (dl) and twist (twi), and the anteroposterior patterning transcription factors bicoid (bcd) and caudal (cad). Promotes the activity of patterning transcription factors, such as bcd and dl, by lowering the concentration threshold required for transcriptional activation. Required both for the earliest (minor) and major waves of transcription during ZGA. Also involved in maternal mRNA clearance during the maternal-to-zygote transition by promoting expression of microRNAs (miRNAs), such as miR-1, miR-9a and miR-309, which mediate degradation of maternally-loaded RNAs. Also involved in post-blastoderm development: nvolved in nervous system development by maintaining neuroblasts in an undifferentiated state and equired for wing disk development. Constitutes the main isoform expressed throughout development. Transcription factor required for zygotic genome activation (ZGA). In terms of biological role, acts as a dominant negative inhibitor of transcription factor activity of isoform A. The polypeptide is Transcription factor Zelda (Drosophila melanogaster (Fruit fly)).